A 607-amino-acid polypeptide reads, in one-letter code: Protein NRT1/ PTR FAMILY 1.2 (607 aa).

The next 10 helical transmembrane spans lie at 65-85, 96-116, 138-158, 185-205, 215-235, 374-394, 418-438, 460-480, 496-516, and 544-564; these read TNVL…GAFL, ISIA…TAML, ASQL…SGGI, FFGW…TGIV, IGFG…ILAS, VPAG…VILY, MGLG…VESF, AMWL…TAIG, IAAS…SVVL, and YYWV…ICSW. Position 601 is a phosphoserine (Ser-601).

Belongs to the major facilitator superfamily. Proton-dependent oligopeptide transporter (POT/PTR) (TC 2.A.17) family. In terms of tissue distribution, expressed in shoots, stems, leaves, flowers and siliques. Mainly detected in larger expanded leaves, in the companion cells of major veins.

It localises to the cell membrane. Functionally, low-affinity nitrate transporter involved in xylem-to-phloem transfer for redistributing nitrate into developing leaves. Not involved in dipeptides transport. The chain is Protein NRT1/ PTR FAMILY 1.2 (NPF1.2) from Arabidopsis thaliana (Mouse-ear cress).